The following is a 200-amino-acid chain: Probable molybdenum cofactor guanylyltransferase (200 aa).

GTP is bound by residues 9 to 11, lysine 21, aspartate 69, and aspartate 100; that span reads LAG. Position 100 (aspartate 100) interacts with Mg(2+).

It belongs to the MobA family. Mg(2+) is required as a cofactor.

It is found in the cytoplasm. The enzyme catalyses Mo-molybdopterin + GTP + H(+) = Mo-molybdopterin guanine dinucleotide + diphosphate. Functionally, transfers a GMP moiety from GTP to Mo-molybdopterin (Mo-MPT) cofactor (Moco or molybdenum cofactor) to form Mo-molybdopterin guanine dinucleotide (Mo-MGD) cofactor. This Bacillus cereus (strain B4264) protein is Probable molybdenum cofactor guanylyltransferase.